The following is a 258-amino-acid chain: Very-long-chain aldehyde decarbonylase GL1-9 (258 aa).

Helical transmembrane passes span 13 to 33, 63 to 83, 88 to 108, 149 to 169, and 175 to 195; these read MGTFAPIALYWVYAGGYQLVL, GVLLQQLVQAIVAMILFMVTS, VVVQPPIIIQAFQFLVAMLVM, PLEGLLLDTVGGAISFLVSGM, and VFFFCFAVLKTVDDHCGLWLP. One can recognise a Fatty acid hydroxylase domain in the interval 101-237; sequence FLVAMLVMDS…FSIWDRILGT (137 aa).

It belongs to the sterol desaturase family. As to quaternary structure, homodimer.

Its subcellular location is the endoplasmic reticulum membrane. The catalysed reaction is a long-chain fatty aldehyde + 2 NADPH + O2 + H(+) = a long-chain alkane + formate + 2 NADP(+) + H2O. Aldehyde decarbonylase involved in the conversion of aldehydes to alkanes. Core component of a very-long-chain alkane synthesis complex. In Oryza sativa subsp. indica (Rice), this protein is Very-long-chain aldehyde decarbonylase GL1-9.